A 1097-amino-acid chain; its full sequence is DNA-directed RNA polymerase subunit beta (1097 aa).

Residues 1072–1097 (QDVNPRRSTPSRPTYESLGVADYDED) are disordered.

Belongs to the RNA polymerase beta chain family. As to quaternary structure, in cyanobacteria the RNAP catalytic core is composed of 2 alpha, 1 beta, 1 beta', 1 gamma and 1 omega subunit. When a sigma factor is associated with the core the holoenzyme is formed, which can initiate transcription.

It carries out the reaction RNA(n) + a ribonucleoside 5'-triphosphate = RNA(n+1) + diphosphate. Its function is as follows. DNA-dependent RNA polymerase catalyzes the transcription of DNA into RNA using the four ribonucleoside triphosphates as substrates. This Parasynechococcus marenigrum (strain WH8102) protein is DNA-directed RNA polymerase subunit beta.